The sequence spans 417 residues: MAAEIICVGTELLLGDIVNTNAQYLALELAKLGIPHYYQTVVGDNVERLKKAIAIARERSSILIFTGGLGPTPDDLTTETIADFFQTSLREDQEILAEIEAKFTSLGREMPPSNSKQALIPMGADFLPNPTGTAPGMIWQPEANVTILTFPGVPSEMKRMWVETAIPYLESQGWGKERIYSRYLKFRGIGESALAEKVAHLFDLTNPTVAPYASLGEVRLRIATKAPSLEAALQVIEPVATEIKEIAGLDYFGADDDTLPAVVGELLRWQKQTLSVAESCTGGGLGEIITQIAGSSDYFGGGVISYDNRVKVALLDVNEGDLNNFGAVSAIVAQQMALGVQKRLATDWGISITGIAGPGGGSETKPVGLVYIGLASPEGNVTVSEHRFGENRDRLTIRQISAYTALDRLRRNLLIMS.

Belongs to the CinA family.

This Microcystis aeruginosa (strain NIES-843 / IAM M-2473) protein is CinA-like protein.